The chain runs to 308 residues: Olfactory receptor 13H1 (308 aa).

The Extracellular segment spans residues 1–25 (MAMDNVTAVFQFLLIGISNYPQWRD). N5 carries N-linked (GlcNAc...) asparagine glycosylation. The helical transmembrane segment at 26–46 (TFFTLVLIIYLSTLLGNGFMI) threads the bilayer. The Cytoplasmic portion of the chain corresponds to 47-54 (FLIHFDPN). Residues 55-75 (LHTPIYFFLSNLSFLDLCYGT) form a helical membrane-spanning segment. The Extracellular segment spans residues 76 to 99 (ASMPQALVHCFSTHPYLSYPRCLA). A disulfide bond links C97 and C188. A helical transmembrane segment spans residues 100–120 (QTSVSLALATAECLLLAAMAY). The Cytoplasmic portion of the chain corresponds to 121–139 (DRVVAISNPLRYSVVMNGP). A helical transmembrane segment spans residues 140 to 159 (VCVCLVATSWGTSLVLTAML). Over 160–196 (ILSLRLHFCGANVINHFACEILSLIKLTCSDTSLNEF) the chain is Extracellular. The helical transmembrane segment at 197–216 (MILITSIFTLLLPFGFVLLS) threads the bilayer. The Cytoplasmic portion of the chain corresponds to 217–236 (YIRIAMAIIRIRSLQGRLKA). The helical transmembrane segment at 237–257 (FTTCGSHLTVVTIFYGSAISM) threads the bilayer. Topologically, residues 258 to 270 (YMKTQSKSYPDQD) are extracellular. A helical membrane pass occupies residues 271–291 (KFISVFYGALTPMLNPLIYSL). Over 292-308 (RKKDVKRAIRKVMLKRT) the chain is Cytoplasmic.

Belongs to the G-protein coupled receptor 1 family.

It localises to the cell membrane. Odorant receptor. This chain is Olfactory receptor 13H1 (OR13H1), found in Homo sapiens (Human).